A 270-amino-acid polypeptide reads, in one-letter code: Beta carbonic anhydrase 1 (270 aa).

Residues Cys-39, Asp-41, His-105, and Cys-108 each contribute to the Zn(2+) site.

Belongs to the beta-class carbonic anhydrase family. As to quaternary structure, oligomer. Zn(2+) is required as a cofactor.

The enzyme catalyses hydrogencarbonate + H(+) = CO2 + H2O. Its function is as follows. Reversible hydration of carbon dioxide. This is Beta carbonic anhydrase 1 (bca-1) from Caenorhabditis elegans.